A 206-amino-acid polypeptide reads, in one-letter code: Interleukin-24 (206 aa).

Residues 1-51 (MNFQQRLQSLWTLARPFCPPLLATASQMQMVVLPCLGFTLLLWSQVSGAQG) form the signal peptide. An intrachain disulfide couples C59 to C106. N85 and N99 each carry an N-linked (GlcNAc...) asparagine glycan. Residue K122 forms a Glycyl lysine isopeptide (Lys-Gly) (interchain with G-Cter in ubiquitin) linkage. N126 carries an N-linked (GlcNAc...) asparagine glycan.

This sequence belongs to the IL-10 family. In terms of processing, glycosylated. Ubiquitination at Lys-122 promotes proteasomal degradation. In terms of tissue distribution, up-regulated in melanoma cells induced to terminally differentiate.

The protein localises to the secreted. Its function is as follows. Multifunctional cytokine mainly produced by T-cells that plays a regulatory role in immune response, tissue homeostasis, host defense, and oncogenesis. Possesses antiviral functions and induces the type I interferon response during influenza infection. Signals through two receptor complexes IL20RA/IL20RB or IL20RB/IL22RA1. In turn, stimulates the JAK1-STAT3 and MAPK pathways and promotes the secretion of pro-inflammatory mediators including IL8 and MMP1. Intracellularly, maintains endoplasmic reticulum homeostasis by restricting the eIF2alpha-CHOP pathway-mediated stress signal. In addition, acts as a quality control mechanism for the ubiquitin proteasome system by alerting the cell to proteasome dysfunction through activation of PKR/EIF2AK2. The protein is Interleukin-24 (IL24) of Homo sapiens (Human).